We begin with the raw amino-acid sequence, 121 residues long: Ribonuclease P protein component (121 aa).

Belongs to the RnpA family. As to quaternary structure, consists of a catalytic RNA component (M1 or rnpB) and a protein subunit.

It catalyses the reaction Endonucleolytic cleavage of RNA, removing 5'-extranucleotides from tRNA precursor.. In terms of biological role, RNaseP catalyzes the removal of the 5'-leader sequence from pre-tRNA to produce the mature 5'-terminus. It can also cleave other RNA substrates such as 4.5S RNA. The protein component plays an auxiliary but essential role in vivo by binding to the 5'-leader sequence and broadening the substrate specificity of the ribozyme. The protein is Ribonuclease P protein component of Rickettsia prowazekii (strain Madrid E).